We begin with the raw amino-acid sequence, 156 residues long: Cytochrome c-type biogenesis protein CcmE 1 (156 aa).

Over 1–8 (MNATRKQR) the chain is Cytoplasmic. The chain crosses the membrane as a helical; Signal-anchor for type II membrane protein span at residues 9 to 29 (LWLVIGVLTAAALAVTLIALA). At 30-156 (LQRNMSYLFT…AAAAPLSGVR (127 aa)) the chain is on the periplasmic side. Heme-binding residues include His-123 and Tyr-127.

Belongs to the CcmE/CycJ family.

Its subcellular location is the cell inner membrane. In terms of biological role, heme chaperone required for the biogenesis of c-type cytochromes. Transiently binds heme delivered by CcmC and transfers the heme to apo-cytochromes in a process facilitated by CcmF and CcmH. In Xanthomonas campestris pv. campestris (strain 8004), this protein is Cytochrome c-type biogenesis protein CcmE 1.